Consider the following 227-residue polypeptide: Cytochrome c oxidase subunit 2 (227 aa).

The Mitochondrial intermembrane portion of the chain corresponds to 1–14 (MAYPMQLGLQDATS). Residues 15-45 (PIMEELTDFHDHTLMIVFLISTLVLYIISMM) form a helical membrane-spanning segment. The Mitochondrial matrix segment spans residues 46-59 (LTTKLTHTSTMDAQ). The chain crosses the membrane as a helical span at residues 60–87 (EVETIWTVLPAVILVMIALPSLRILYMM). Residues 88 to 227 (DEINDPYLTV…QFESWASSMT (140 aa)) are Mitochondrial intermembrane-facing. The Cu cation site is built by His161, Cys196, Glu198, Cys200, His204, and Met207. Glu198 serves as a coordination point for Mg(2+).

The protein belongs to the cytochrome c oxidase subunit 2 family. In terms of assembly, component of the cytochrome c oxidase (complex IV, CIV), a multisubunit enzyme composed of 14 subunits. The complex is composed of a catalytic core of 3 subunits MT-CO1, MT-CO2 and MT-CO3, encoded in the mitochondrial DNA, and 11 supernumerary subunits COX4I, COX5A, COX5B, COX6A, COX6B, COX6C, COX7A, COX7B, COX7C, COX8 and NDUFA4, which are encoded in the nuclear genome. The complex exists as a monomer or a dimer and forms supercomplexes (SCs) in the inner mitochondrial membrane with NADH-ubiquinone oxidoreductase (complex I, CI) and ubiquinol-cytochrome c oxidoreductase (cytochrome b-c1 complex, complex III, CIII), resulting in different assemblies (supercomplex SCI(1)III(2)IV(1) and megacomplex MCI(2)III(2)IV(2)). Found in a complex with TMEM177, COA6, COX18, COX20, SCO1 and SCO2. Interacts with TMEM177 in a COX20-dependent manner. Interacts with COX20. Interacts with COX16. Cu cation serves as cofactor.

The protein localises to the mitochondrion inner membrane. It catalyses the reaction 4 Fe(II)-[cytochrome c] + O2 + 8 H(+)(in) = 4 Fe(III)-[cytochrome c] + 2 H2O + 4 H(+)(out). In terms of biological role, component of the cytochrome c oxidase, the last enzyme in the mitochondrial electron transport chain which drives oxidative phosphorylation. The respiratory chain contains 3 multisubunit complexes succinate dehydrogenase (complex II, CII), ubiquinol-cytochrome c oxidoreductase (cytochrome b-c1 complex, complex III, CIII) and cytochrome c oxidase (complex IV, CIV), that cooperate to transfer electrons derived from NADH and succinate to molecular oxygen, creating an electrochemical gradient over the inner membrane that drives transmembrane transport and the ATP synthase. Cytochrome c oxidase is the component of the respiratory chain that catalyzes the reduction of oxygen to water. Electrons originating from reduced cytochrome c in the intermembrane space (IMS) are transferred via the dinuclear copper A center (CU(A)) of subunit 2 and heme A of subunit 1 to the active site in subunit 1, a binuclear center (BNC) formed by heme A3 and copper B (CU(B)). The BNC reduces molecular oxygen to 2 water molecules using 4 electrons from cytochrome c in the IMS and 4 protons from the mitochondrial matrix. The sequence is that of Cytochrome c oxidase subunit 2 (MT-CO2) from Cratogeomys bursarius (Plains pocket gopher).